The chain runs to 427 residues: Trigger factor (427 aa).

A PPIase FKBP-type domain is found at 163–248 (GDTVVIDFVG…IHEVKAKEVP (86 aa)).

It belongs to the FKBP-type PPIase family. Tig subfamily.

It is found in the cytoplasm. The catalysed reaction is [protein]-peptidylproline (omega=180) = [protein]-peptidylproline (omega=0). In terms of biological role, involved in protein export. Acts as a chaperone by maintaining the newly synthesized protein in an open conformation. Functions as a peptidyl-prolyl cis-trans isomerase. The polypeptide is Trigger factor (Streptococcus suis (strain 98HAH33)).